Here is a 1297-residue protein sequence, read N- to C-terminus: Phosphoribosylformylglycinamidine synthase (1297 aa).

A disordered region spans residues 304–323; it reads PFPGAATGSGGEIRDEGATG. ATP-binding positions include 307-318 and A678; that span reads GAATGSGGEIRD. Residues D679, E718, N722, and D886 each contribute to the Mg(2+) site. Residue S888 participates in ATP binding. In terms of domain architecture, Glutamine amidotransferase type-1 spans 1043 to 1297; sequence RIAILREQGV…LFQNARVALG (255 aa). The Nucleophile role is filled by C1137. Active-site residues include H1262 and E1264.

This sequence in the N-terminal section; belongs to the FGAMS family. In terms of assembly, monomer.

The protein resides in the cytoplasm. The enzyme catalyses N(2)-formyl-N(1)-(5-phospho-beta-D-ribosyl)glycinamide + L-glutamine + ATP + H2O = 2-formamido-N(1)-(5-O-phospho-beta-D-ribosyl)acetamidine + L-glutamate + ADP + phosphate + H(+). Its pathway is purine metabolism; IMP biosynthesis via de novo pathway; 5-amino-1-(5-phospho-D-ribosyl)imidazole from N(2)-formyl-N(1)-(5-phospho-D-ribosyl)glycinamide: step 1/2. Functionally, phosphoribosylformylglycinamidine synthase involved in the purines biosynthetic pathway. Catalyzes the ATP-dependent conversion of formylglycinamide ribonucleotide (FGAR) and glutamine to yield formylglycinamidine ribonucleotide (FGAM) and glutamate. This chain is Phosphoribosylformylglycinamidine synthase, found in Histophilus somni (strain 129Pt) (Haemophilus somnus).